The chain runs to 86 residues: Small ribosomal subunit protein uS17 (86 aa).

It belongs to the universal ribosomal protein uS17 family. As to quaternary structure, part of the 30S ribosomal subunit.

Functionally, one of the primary rRNA binding proteins, it binds specifically to the 5'-end of 16S ribosomal RNA. This is Small ribosomal subunit protein uS17 from Nitrosococcus oceani (strain ATCC 19707 / BCRC 17464 / JCM 30415 / NCIMB 11848 / C-107).